We begin with the raw amino-acid sequence, 246 residues long: Bis(5'-nucleosyl)-tetraphosphatase PrpE [asymmetrical] (246 aa).

The protein belongs to the PrpE family. Ni(2+) is required as a cofactor.

The enzyme catalyses P(1),P(4)-bis(5'-guanosyl) tetraphosphate + H2O = GMP + GTP + 2 H(+). Functionally, asymmetrically hydrolyzes Ap4p to yield AMP and ATP. This is Bis(5'-nucleosyl)-tetraphosphatase PrpE [asymmetrical] from Bacillus cereus (strain ATCC 14579 / DSM 31 / CCUG 7414 / JCM 2152 / NBRC 15305 / NCIMB 9373 / NCTC 2599 / NRRL B-3711).